A 259-amino-acid polypeptide reads, in one-letter code: 3-deoxy-manno-octulosonate cytidylyltransferase (259 aa).

This sequence belongs to the KdsB family.

Its subcellular location is the cytoplasm. The catalysed reaction is 3-deoxy-alpha-D-manno-oct-2-ulosonate + CTP = CMP-3-deoxy-beta-D-manno-octulosonate + diphosphate. It functions in the pathway nucleotide-sugar biosynthesis; CMP-3-deoxy-D-manno-octulosonate biosynthesis; CMP-3-deoxy-D-manno-octulosonate from 3-deoxy-D-manno-octulosonate and CTP: step 1/1. It participates in bacterial outer membrane biogenesis; lipopolysaccharide biosynthesis. Activates KDO (a required 8-carbon sugar) for incorporation into bacterial lipopolysaccharide in Gram-negative bacteria. The polypeptide is 3-deoxy-manno-octulosonate cytidylyltransferase (Nitrosococcus oceani (strain ATCC 19707 / BCRC 17464 / JCM 30415 / NCIMB 11848 / C-107)).